Here is a 301-residue protein sequence, read N- to C-terminus: Probable alpha-L-glutamate ligase 2 (301 aa).

One can recognise an ATP-grasp domain in the interval 104–287 (MQLLSRKGIG…VASMIIEFIV (184 aa)). ATP is bound by residues lysine 141, 178–179 (EY), aspartate 187, and 211–213 (RSN). Aspartate 248, glutamate 260, and asparagine 262 together coordinate Mg(2+). Residues aspartate 248, glutamate 260, and asparagine 262 each coordinate Mn(2+).

The protein belongs to the RimK family. Mg(2+) is required as a cofactor. Requires Mn(2+) as cofactor.

The chain is Probable alpha-L-glutamate ligase 2 from Pseudoalteromonas atlantica (strain T6c / ATCC BAA-1087).